Reading from the N-terminus, the 259-residue chain is Sugar fermentation stimulation protein homolog (259 aa).

This sequence belongs to the SfsA family.

The sequence is that of Sugar fermentation stimulation protein homolog from Chloroflexus aurantiacus (strain ATCC 29364 / DSM 637 / Y-400-fl).